The chain runs to 688 residues: Glycine--tRNA ligase beta subunit (688 aa).

This sequence belongs to the class-II aminoacyl-tRNA synthetase family. Tetramer of two alpha and two beta subunits.

The protein localises to the cytoplasm. The enzyme catalyses tRNA(Gly) + glycine + ATP = glycyl-tRNA(Gly) + AMP + diphosphate. The polypeptide is Glycine--tRNA ligase beta subunit (Haemophilus influenzae (strain PittEE)).